The chain runs to 334 residues: Meso-diaminopimelate D-dehydrogenase (334 aa).

NADP(+)-binding positions include 16–19 (YGNL), 40–42 (TRR), 75–78 (CSGS), 98–100 (GFD), and 127–131 (CGWDP). Residues aspartate 100, aspartate 130, tryptophan 154, 160–161 (QG), threonine 179, arginine 205, histidine 255, and asparagine 284 contribute to the substrate site.

Belongs to the diaminopimelate dehydrogenase family. As to quaternary structure, homodimer.

The enzyme catalyses meso-2,6-diaminopimelate + NADP(+) + H2O = (S)-2-amino-6-oxoheptanedioate + NH4(+) + NADPH + H(+). The protein operates within amino-acid biosynthesis; L-lysine biosynthesis via DAP pathway; DL-2,6-diaminopimelate from (S)-tetrahydrodipicolinate: step 1/1. Functionally, catalyzes the reversible NADPH-dependent reductive amination of L-2-amino-6-oxopimelate, the acyclic form of L-tetrahydrodipicolinate, to generate the meso compound, D,L-2,6-diaminopimelate. Probably plays a role in lysine biosynthesis. Exhibits a high substrate specificity for meso-2,6-diaminopimelate (m-DAP), since the activity with L,L-2,6-diaminopimelate is less than 5% of the activity observed with m-DAP. Can use NAD(+) only very poorly since the activity observed in the presence of NAD(+) is about 0.3% of that with NADP(+). This chain is Meso-diaminopimelate D-dehydrogenase (ddh), found in Acetivibrio thermocellus (strain ATCC 27405 / DSM 1237 / JCM 9322 / NBRC 103400 / NCIMB 10682 / NRRL B-4536 / VPI 7372) (Clostridium thermocellum).